We begin with the raw amino-acid sequence, 663 residues long: DNA topoisomerase 4 subunit B (663 aa).

Residues tyrosine 7, asparagine 47, aspartate 74, 114 to 120, and lysine 341 contribute to the ATP site; that span reads GLHGVGA. The segment at 386–416 is disordered; it reads REAARKAREDARSGKKNKRKDTLLSGKLTPA. Residues 387–398 show a composition bias toward basic and acidic residues; it reads EAARKAREDARS. The Toprim domain occupies 424-538; it reads NELYLVEGDS…AGRVFIALPP (115 aa). Residues glutamate 430, aspartate 503, and aspartate 505 each coordinate Mg(2+).

The protein belongs to the type II topoisomerase family. ParE type 2 subfamily. As to quaternary structure, heterotetramer composed of ParC and ParE. Mg(2+) is required as a cofactor. The cofactor is Mn(2+). Requires Ca(2+) as cofactor.

The catalysed reaction is ATP-dependent breakage, passage and rejoining of double-stranded DNA.. Its function is as follows. Topoisomerase IV is essential for chromosome segregation. It relaxes supercoiled DNA. Performs the decatenation events required during the replication of a circular DNA molecule. This Staphylococcus aureus (strain NCTC 8325 / PS 47) protein is DNA topoisomerase 4 subunit B.